The following is a 498-amino-acid chain: Guanosine-5'-triphosphate,3'-diphosphate pyrophosphatase (498 aa).

It belongs to the GppA/Ppx family. GppA subfamily.

It catalyses the reaction guanosine 3'-diphosphate 5'-triphosphate + H2O = guanosine 3',5'-bis(diphosphate) + phosphate + H(+). It participates in purine metabolism; ppGpp biosynthesis; ppGpp from GTP: step 2/2. Catalyzes the conversion of pppGpp to ppGpp. Guanosine pentaphosphate (pppGpp) is a cytoplasmic signaling molecule which together with ppGpp controls the 'stringent response', an adaptive process that allows bacteria to respond to amino acid starvation, resulting in the coordinated regulation of numerous cellular activities. The protein is Guanosine-5'-triphosphate,3'-diphosphate pyrophosphatase of Serratia proteamaculans (strain 568).